Consider the following 237-residue polypeptide: Ribosomal RNA small subunit methyltransferase G (237 aa).

S-adenosyl-L-methionine contacts are provided by residues glycine 79, 130–131 (CE), and arginine 147.

Belongs to the methyltransferase superfamily. RNA methyltransferase RsmG family.

The protein localises to the cytoplasm. In terms of biological role, specifically methylates the N7 position of a guanine in 16S rRNA. The sequence is that of Ribosomal RNA small subunit methyltransferase G from Malacoplasma penetrans (strain HF-2) (Mycoplasma penetrans).